The primary structure comprises 854 residues: Nucleolar MIF4G domain-containing protein 1 (854 aa).

Positions Pro2–Gln275 are necessary for nucleolar localization and for targeting PPP1CA to the nucleolus. Ser60 is subject to Phosphoserine. Disordered regions lie at residues Glu66–Phe215 and Ser231–Tyr333. Residues Pro76–Gln99 are compositionally biased toward basic residues. A compositionally biased stretch (gly residues) spans Ser104 to Val113. Positions Val128–Thr173 are enriched in low complexity. The span at Arg188–Leu197 shows a compositional bias: basic and acidic residues. Positions Ser265–Asp280 are enriched in acidic residues. Basic and acidic residues-rich tracts occupy residues Val281–Ser291, Arg303–Ser315, and Gln322–Glu331. Positions Lys301 to Phe304 match the Required for efficient binding to PPP1CA and for targeting PPP1CA to the nucleolus motif. Phosphoserine occurs at positions 311, 314, and 315. Residues Lys356–Asp553 enclose the MIF4G domain. An MI domain is found at Asp648–Phe764.

The protein belongs to the CWC22 family. As to quaternary structure, may interact with EIF4A1, EIF4A2 and EIF4A3. Interacts with PPP1CA and PPP1CC.

The protein resides in the nucleus. It is found in the nucleolus. Functionally, plays a role in targeting PPP1CA to the nucleolus. The chain is Nucleolar MIF4G domain-containing protein 1 (Nom1) from Mus musculus (Mouse).